The chain runs to 648 residues: Biosynthetic arginine decarboxylase (648 aa).

Position 109 is an N6-(pyridoxal phosphate)lysine (Lys109). 291–301 (IDVGGGLGIDF) contacts substrate.

It belongs to the Orn/Lys/Arg decarboxylase class-II family. SpeA subfamily. Requires Mg(2+) as cofactor. Pyridoxal 5'-phosphate serves as cofactor.

It carries out the reaction L-arginine + H(+) = agmatine + CO2. It participates in amine and polyamine biosynthesis; agmatine biosynthesis; agmatine from L-arginine: step 1/1. Catalyzes the biosynthesis of agmatine from arginine. This is Biosynthetic arginine decarboxylase from Prochlorococcus marinus (strain MIT 9301).